The primary structure comprises 411 residues: Glutamate dehydrogenase 3, mitochondrial (411 aa).

Residues 1-18 (MNALAATSRNFRQAARLL) constitute a mitochondrion transit peptide. The active site involves K102.

Belongs to the Glu/Leu/Phe/Val dehydrogenases family. In terms of tissue distribution, barely expressed in leaves, spikelets and roots. Glumes and stamens specific accumulation.

It localises to the mitochondrion. The enzyme catalyses L-glutamate + NAD(+) + H2O = 2-oxoglutarate + NH4(+) + NADH + H(+). The catalysed reaction is L-glutamate + NADP(+) + H2O = 2-oxoglutarate + NH4(+) + NADPH + H(+). The protein is Glutamate dehydrogenase 3, mitochondrial (GDH3) of Oryza sativa subsp. japonica (Rice).